Reading from the N-terminus, the 571-residue chain is Proline--tRNA ligase (571 aa).

It belongs to the class-II aminoacyl-tRNA synthetase family. ProS type 1 subfamily. In terms of assembly, homodimer.

The protein resides in the cytoplasm. The catalysed reaction is tRNA(Pro) + L-proline + ATP = L-prolyl-tRNA(Pro) + AMP + diphosphate. Catalyzes the attachment of proline to tRNA(Pro) in a two-step reaction: proline is first activated by ATP to form Pro-AMP and then transferred to the acceptor end of tRNA(Pro). As ProRS can inadvertently accommodate and process non-cognate amino acids such as alanine and cysteine, to avoid such errors it has two additional distinct editing activities against alanine. One activity is designated as 'pretransfer' editing and involves the tRNA(Pro)-independent hydrolysis of activated Ala-AMP. The other activity is designated 'posttransfer' editing and involves deacylation of mischarged Ala-tRNA(Pro). The misacylated Cys-tRNA(Pro) is not edited by ProRS. In Photobacterium profundum (strain SS9), this protein is Proline--tRNA ligase.